Here is a 257-residue protein sequence, read N- to C-terminus: Diaminopimelate epimerase (257 aa).

The substrate site is built by N6 and N57. C66 functions as the Proton donor in the catalytic mechanism. Residues 67 to 68, N170, and 188 to 189 contribute to the substrate site; these read GN and ER. C198 functions as the Proton acceptor in the catalytic mechanism. 199–200 is a binding site for substrate; sequence GT.

Belongs to the diaminopimelate epimerase family. Homodimer.

It localises to the cytoplasm. It carries out the reaction (2S,6S)-2,6-diaminopimelate = meso-2,6-diaminopimelate. It participates in amino-acid biosynthesis; L-lysine biosynthesis via DAP pathway; DL-2,6-diaminopimelate from LL-2,6-diaminopimelate: step 1/1. In terms of biological role, catalyzes the stereoinversion of LL-2,6-diaminopimelate (L,L-DAP) to meso-diaminopimelate (meso-DAP), a precursor of L-lysine and an essential component of the bacterial peptidoglycan. This Chlorobaculum tepidum (strain ATCC 49652 / DSM 12025 / NBRC 103806 / TLS) (Chlorobium tepidum) protein is Diaminopimelate epimerase.